The primary structure comprises 283 residues: SNF1-related protein kinase regulatory subunit beta-1 (283 aa).

Basic and acidic residues predominate over residues 1–10 (MGNANGKDED). The segment at 1 to 63 (MGNANGKDED…PARSPSPFLF (63 aa)) is disordered. Residue Gly-2 is the site of N-myristoyl glycine attachment. The segment covering 43-60 (SDSMSSSPPGSPARSPSP) has biased composition (low complexity). Residues 101 to 178 (PTIITWNQGG…VGNVCNILDV (78 aa)) are kinase-interacting sequence (KIS). Positions 215–283 (EPLAVPPQLH…TVVLYKPLTR (69 aa)) are association with SNF1 complex (ASC).

This sequence belongs to the 5'-AMP-activated protein kinase beta subunit family. Subunit of a probable heterotrimeric complex consisting of an alpha catalytic (KIN10 or KIN11) subunit, and a beta (KINB) and a gamma (KING or SNF4) non-catalytic regulatory subunits. Interacts with SNF4 and CBL1. Interacts with FLZ1, FLZ2, FLZ8, FLZ9, FLZ10, FLZ12, FLZ13, FLZ14 and FLZ15. Post-translationally, sumoylated by SIZ1. In terms of tissue distribution, expressed in vegetative organs and, to lower extent, in reproductive organs.

The protein localises to the cell membrane. In terms of biological role, regulatory subunit of the probable trimeric SNF1-related protein kinase (SnRK) complex, which may play a role in a signal transduction cascade regulating gene expression and carbohydrate metabolism in higher plants. The SnRK complex may also be involved in the regulation of fatty acid synthesis by phosphorylation of acetyl-CoA carboxylase and in assimilation of nitrogen by phosphorylating nitrate reductase. The sequence is that of SNF1-related protein kinase regulatory subunit beta-1 (KINB1) from Arabidopsis thaliana (Mouse-ear cress).